We begin with the raw amino-acid sequence, 489 residues long: MAIDLRPFIPFGRGALSQATDPFRAAVEFTLMPMLITNPHLPDNPIVFANPAFLKLTGYEADEVMGRNCRFLQGHGTDPAHVRAIKSAIAAEKPIDIDIINYKKSGEAFWNRLHISPVHNANGRLQHFVSSQLDVTLELSRLVELEKERKTLSIETARSKDQLDYIVEVANIGFWTREFYSGKMTCSAECRRIYGFTPDEPVHFDTILDLVVLEDRMTVVQKAHQAVTGEPYSIEYRIVTRLGETRWLETRAKALTGENPLVLGIVQDVTERKKAEANKALVSREIAHRFKNSMAMVQSIANQTLRNTYDPEQANRLFSERLRALSQAHDMLLKENWAGATIQQICATALAPFNSTFANRIHMSGPHLLVSDRVTVALSLAFYELATNAVKYGALSNEKGVINITWAIMEDKGEKKFHMRWAESRGPEVMQPARRGFGQRLLHSVLAEELKAKCDVEFAASGLLIDVLAPITPEVFPGMGHNVPEQRIA.

Residues 19–93 (ATDPFRAAVE…AIKSAIAAEK (75 aa)) form the PAS domain. S-4a-FMN cysteine is present on cysteine 69. PAC domains lie at 93-147 (KPID…ELEK) and 232-281 (YSIE…NKAL). The segment at 259 to 341 (NPLVLGIVQD…LLKENWAGAT (83 aa)) is HWE histidine kinase domain. Histidine 288 carries the phosphohistidine; by autocatalysis modification.

Post-translationally, FMN binds covalently to cysteine after exposure to blue light and this bond is spontaneously broken in the dark.

The enzyme catalyses ATP + protein L-histidine = ADP + protein N-phospho-L-histidine.. Photosensitive kinase that is involved in increased bacterial virulence upon exposure to light. Once ejected from an infected animal host, sunlight acts as an environmental signal that increases the virulence of the bacterium, preparing it for infection of the next host. This photoreceptor protein is directly related to the bacterium's survival and replication within host macrophages, as it is required for optimal replication of bacteria inside macrophages. The polypeptide is Blue-light-activated histidine kinase (Brucella abortus (strain 2308)).